Consider the following 703-residue polypeptide: Calpain-8 (703 aa).

Residues 45–344 (LFKDPEFPAC…YSRLEICNLS (300 aa)) enclose the Calpain catalytic domain. Catalysis depends on residues Cys-105, His-262, and Asn-286. Residues 355–512 (KWNLVLFNGR…VFSEKKAKAL (158 aa)) form a domain III region. The tract at residues 513–531 (EIGDTVSGHPHEPHPRDMD) is linker. 4 consecutive EF-hand domains span residues 532–566 (EEDE…VLSK), 575–608 (FNIN…LKIR), 605–640 (LKIR…AGFT), and 670–703 (IRLE…CVLV). The tract at residues 532-703 (EEDEHVRSLF…LAEWLCCVLV (172 aa)) is domain IV. Residues Asp-588, Asp-590, Thr-592, Ser-594, Glu-599, Asp-618, Asn-620, Thr-624, and Glu-629 each contribute to the Ca(2+) site.

The protein belongs to the peptidase C2 family. Monomer and homooligomer. Interacts with COPS1/GPS1, COPB1, EYA2, NME2, NME4 and TOMM70. Ca(2+) is required as a cofactor. Undergoes autolytic cleavage between Ala-5 and Ala-6 which gives rise to fragments extending from Ala-6 to the C-terminus, Ala-6 to the EF-hand 2 domain and from Ala-6 to the beginning of domain III. Predominantly expressed in the stomach. Localizes strictly to the surface mucus cells in the gastric epithelium and the mucus-secreting goblet cells in the duodenum. Detected in the pituitary after estrogen stimulation.

The protein resides in the cytoplasm. It is found in the golgi apparatus. It carries out the reaction Broad endopeptidase specificity.. Its function is as follows. Calcium-regulated non-lysosomal thiol-protease. Involved in membrane trafficking in the gastric surface mucus cells (pit cells) and may involve the membrane trafficking of mucus cells via interactions with coat protein. Proteolytically cleaves the beta-subunit of coatomer complex. In Rattus norvegicus (Rat), this protein is Calpain-8 (Capn8).